The sequence spans 232 residues: Flagellar L-ring protein (232 aa).

Residues 1–21 (MQKNAAHTYAISSLLVLSLTG) form the signal peptide. Cysteine 22 carries the N-palmitoyl cysteine lipid modification. Residue cysteine 22 is the site of S-diacylglycerol cysteine attachment.

Belongs to the FlgH family. As to quaternary structure, the basal body constitutes a major portion of the flagellar organelle and consists of four rings (L,P,S, and M) mounted on a central rod.

Its subcellular location is the cell outer membrane. The protein resides in the bacterial flagellum basal body. Assembles around the rod to form the L-ring and probably protects the motor/basal body from shearing forces during rotation. The protein is Flagellar L-ring protein (flgH) of Shigella flexneri.